The chain runs to 254 residues: Decaprenylphosphoryl-2-keto-beta-D-erythro-pentose reductase (254 aa).

Residue aspartate 67 participates in NAD(+) binding. Tyrosine 160 (proton acceptor) is an active-site residue. Lysine 164 lines the NAD(+) pocket.

This sequence belongs to the short-chain dehydrogenases/reductases (SDR) family. In terms of assembly, interacts with DprE1 to form an epimerase complex.

The protein localises to the periplasm. The catalysed reaction is trans,octa-cis-decaprenylphospho-beta-D-arabinofuranose + NAD(+) = trans,octa-cis-decaprenylphospho-beta-D-erythro-pentofuranosid-2-ulose + NADH + H(+). Its pathway is cell wall biogenesis; cell wall polysaccharide biosynthesis. Component of the DprE1-DprE2 complex that catalyzes the 2-step epimerization of decaprenyl-phospho-ribose (DPR) to decaprenyl-phospho-arabinose (DPA), a key precursor that serves as the arabinose donor required for the synthesis of cell-wall arabinans. DprE1 catalyzes the first step of epimerization, namely FAD-dependent oxidation of the C2' hydroxyl of DPR to yield the keto intermediate decaprenyl-phospho-2'-keto-D-arabinose (DPX). The intermediate DPX is then transferred to DprE2 subunit of the epimerase complex, most probably through a 'substrate channel' at the interface of DprE1-DprE2 complex. DprE2 then catalyzes the second step of epimerization, the NAD(+)-dependent reduction of DPX that leads to the formation of DPA. The polypeptide is Decaprenylphosphoryl-2-keto-beta-D-erythro-pentose reductase (Mycobacterium bovis (strain ATCC BAA-935 / AF2122/97)).